The primary structure comprises 386 residues: Heat-inducible transcription repressor HrcA (386 aa).

It belongs to the HrcA family.

Functionally, negative regulator of class I heat shock genes (grpE-dnaK-dnaJ and groELS operons). Prevents heat-shock induction of these operons. This is Heat-inducible transcription repressor HrcA from Chlamydia abortus (strain DSM 27085 / S26/3) (Chlamydophila abortus).